The sequence spans 313 residues: Small ribosomal subunit protein uS2 (313 aa).

The tract at residues 281 to 301 (AAPAAPAVEPAPEAAQEATAE) is disordered.

Belongs to the universal ribosomal protein uS2 family.

The chain is Small ribosomal subunit protein uS2 from Caulobacter sp. (strain K31).